The primary structure comprises 310 residues: Oxygen-dependent coproporphyrinogen-III oxidase (310 aa).

Residue Ser97 coordinates substrate. Positions 101 and 111 each coordinate a divalent metal cation. His111 acts as the Proton donor in catalysis. Position 113-115 (113-115 (NFR)) interacts with substrate. Residues His150 and His180 each contribute to the a divalent metal cation site. The interval 245-280 (YVEFNLLYDRGTRFGLEFGGRTESILMSLPPRVVWR) is important for dimerization. 263 to 265 (GGR) is a binding site for substrate.

This sequence belongs to the aerobic coproporphyrinogen-III oxidase family. As to quaternary structure, homodimer. Requires a divalent metal cation as cofactor.

It localises to the cytoplasm. It catalyses the reaction coproporphyrinogen III + O2 + 2 H(+) = protoporphyrinogen IX + 2 CO2 + 2 H2O. It functions in the pathway porphyrin-containing compound metabolism; protoporphyrin-IX biosynthesis; protoporphyrinogen-IX from coproporphyrinogen-III (O2 route): step 1/1. In terms of biological role, involved in the heme biosynthesis. Catalyzes the aerobic oxidative decarboxylation of propionate groups of rings A and B of coproporphyrinogen-III to yield the vinyl groups in protoporphyrinogen-IX. This Coxiella burnetii (strain Dugway 5J108-111) protein is Oxygen-dependent coproporphyrinogen-III oxidase.